A 380-amino-acid chain; its full sequence is Tryptophan--tRNA ligase 2 (380 aa).

The short motif at 74-82 is the 'HIGH' region element; that stretch reads PSGPMHLGH. Positions 249-253 match the 'KMSKS' region motif; it reads KMSSS.

Belongs to the class-I aminoacyl-tRNA synthetase family.

It localises to the cytoplasm. It catalyses the reaction tRNA(Trp) + L-tryptophan + ATP = L-tryptophyl-tRNA(Trp) + AMP + diphosphate + H(+). The protein is Tryptophan--tRNA ligase 2 of Halobacterium salinarum (strain ATCC 700922 / JCM 11081 / NRC-1) (Halobacterium halobium).